A 70-amino-acid chain; its full sequence is Drosomycin (70 aa).

Positions 1–20 (MMQIKYLFALFAVLMLVVLG) are cleaved as a signal peptide. Residues 21–26 (ANEADA) constitute a propeptide that is removed on maturation. 4 disulfide bridges follow: Cys-28–Cys-70, Cys-37–Cys-59, Cys-45–Cys-65, and Cys-49–Cys-67. Asn-42 carries an N-linked (GlcNAc...) asparagine glycan.

As to expression, hemolymph (at protein level). Synthesized in the fat body and is secreted into the blood. In larvae, expressed in the visceral branches and posterior spiracles of the trachea.

The protein localises to the secreted. In terms of biological role, possesses antifungal activity and is active against a relatively broad spectrum of filamentous fungi. It inhibits spore germination at high concentrations and at low concentrations delays growth of hyphae which subsequently exhibit abnormal morphology. Spz C-106 in the hemolymph controls expression of the antifungal peptide by acting as a ligand of Tl and inducing an intracellular signaling pathway. Part of a psh-dependent Toll pathway, which may function in activating the systematic immune response in response to localized melanization of the tracheal system. The sequence is that of Drosomycin (Drs) from Drosophila melanogaster (Fruit fly).